A 568-amino-acid polypeptide reads, in one-letter code: MAGUK p55 subfamily member 3 (568 aa).

2 consecutive L27 domains span residues 6–60 (EDSG…ERQS) and 61–118 (PTPV…FDPV). The PDZ domain maps to 137 to 218 (IVRLVKNKEP…SITLKIIPAT (82 aa)). Positions 226-296 (DSKVFMRALF…PSKQFQERRL (71 aa)) constitute an SH3 domain. S307 carries the post-translational modification Phosphoserine. The region spanning 385-568 (PRLVVLIGSL…QEPAASSELS (184 aa)) is the Guanylate kinase-like domain.

It belongs to the MAGUK family. In terms of assembly, interacts with HTR2C; this interaction stabilizes the receptor at the plasma membrane and prevents the desensitization of the HTR2C receptor-mediated calcium response. Interacts with HTR2A. Interacts with HTR4. Interacts (via PDZ domain) with CADM1 (via C-terminus)Interacts (via PDZ domain) with CADM1; this interaction connects CADM1 with DLG1. Interacts (via Guanylate kinase-like domain) with PALS1. Interacts with DLG1 (via N-terminus); this interaction connects CADM1 with DLG1 and links CADM1 with the regulatory subunit of phosphoinositide-3-kinase (PI3K) by forming a multiprotein complex and participates in cell spreading. Expressed in brain, skeletal muscle, testis, kidney, and lung.

It is found in the apical cell membrane. The protein resides in the cell membrane. Its subcellular location is the cell junction. It localises to the adherens junction. Functionally, participates in cell spreading through the phosphoinositide-3-kinase (PI3K) pathway by connecting CADM1 to DLG1 and the regulatory subunit of phosphoinositide-3-kinase (PI3K). Stabilizes HTR2C at the plasma membrane and prevents its desensitization. May participates in the maintenance of adherens junctions. The protein is MAGUK p55 subfamily member 3 of Mus musculus (Mouse).